Here is a 217-residue protein sequence, read N- to C-terminus: High frequency lysogenization protein HflD homolog (217 aa).

The protein belongs to the HflD family.

It is found in the cytoplasm. The protein resides in the cell membrane. The chain is High frequency lysogenization protein HflD homolog from Buchnera aphidicola subsp. Baizongia pistaciae (strain Bp).